The following is a 217-amino-acid chain: 3,4-dihydroxy-2-butanone 4-phosphate synthase (217 aa).

D-ribulose 5-phosphate is bound by residues 37–38 (RE), aspartate 42, 150–154 (RGGHT), and glutamate 174. Residue glutamate 38 coordinates Mg(2+). Mg(2+) is bound at residue histidine 153.

Belongs to the DHBP synthase family. Homodimer. Requires Mg(2+) as cofactor. It depends on Mn(2+) as a cofactor.

The catalysed reaction is D-ribulose 5-phosphate = (2S)-2-hydroxy-3-oxobutyl phosphate + formate + H(+). The protein operates within cofactor biosynthesis; riboflavin biosynthesis; 2-hydroxy-3-oxobutyl phosphate from D-ribulose 5-phosphate: step 1/1. In terms of biological role, catalyzes the conversion of D-ribulose 5-phosphate to formate and 3,4-dihydroxy-2-butanone 4-phosphate. This Citrobacter koseri (strain ATCC BAA-895 / CDC 4225-83 / SGSC4696) protein is 3,4-dihydroxy-2-butanone 4-phosphate synthase.